Here is a 206-residue protein sequence, read N- to C-terminus: MSTGSVSDPEEMELRGLQREYPVPASKRPPLRGVERSYASPSDNSSAEEEDPDGEEERCALGTAGSAEGCKRKRPRVAGGGGAGGSAGGGGKKPLPAKGSAAECKQSQRNAANARERARMRVLSKAFSRLKTSLPWVPPDTKLSKLDTLRLASSYIAHLRQLLQEDRYENGYVHPVNLTWPFVVSGRPDSDTKEVSAANRLCGTTA.

A disordered region spans residues 1-115 (MSTGSVSDPE…QSQRNAANAR (115 aa)). A compositionally biased stretch (acidic residues) spans 46 to 56 (SAEEEDPDGEE). The Nuclear localization signal signature appears at 71 to 76 (KRKRPR). Over residues 78–92 (AGGGGAGGSAGGGGK) the composition is skewed to gly residues. Residues 93-102 (KPLPAKGSAA) are compositionally biased toward low complexity. The bHLH domain occupies 107–159 (SQRNAANARERARMRVLSKAFSRLKTSLPWVPPDTKLSKLDTLRLASSYIAHL).

In terms of assembly, efficient DNA binding requires dimerization with another bHLH protein. Binds DNA as a homodimer or a heterodimer. Forms a heterodimer with TCF3. As to expression, expressed in lymphoid tissues, B-cell lines and activated B-cells.

It localises to the nucleus. Transcription repressor capable of inhibiting the transactivation capability of TCF3/E47. May play a role in regulating antigen-dependent B-cell differentiation. The protein is Musculin (MSC) of Homo sapiens (Human).